The following is an 81-amino-acid chain: ATP synthase subunit c, chloroplastic (81 aa).

The next 2 membrane-spanning stretches (helical) occupy residues 7 to 27 and 57 to 77; these read AASV…PGIG and LAFM…LLFA.

The protein belongs to the ATPase C chain family. As to quaternary structure, F-type ATPases have 2 components, F(1) - the catalytic core - and F(0) - the membrane proton channel. F(1) has five subunits: alpha(3), beta(3), gamma(1), delta(1), epsilon(1). F(0) has four main subunits: a(1), b(1), b'(1) and c(10-14). The alpha and beta chains form an alternating ring which encloses part of the gamma chain. F(1) is attached to F(0) by a central stalk formed by the gamma and epsilon chains, while a peripheral stalk is formed by the delta, b and b' chains.

It is found in the plastid. It localises to the chloroplast thylakoid membrane. Functionally, f(1)F(0) ATP synthase produces ATP from ADP in the presence of a proton or sodium gradient. F-type ATPases consist of two structural domains, F(1) containing the extramembraneous catalytic core and F(0) containing the membrane proton channel, linked together by a central stalk and a peripheral stalk. During catalysis, ATP synthesis in the catalytic domain of F(1) is coupled via a rotary mechanism of the central stalk subunits to proton translocation. Its function is as follows. Key component of the F(0) channel; it plays a direct role in translocation across the membrane. A homomeric c-ring of between 10-14 subunits forms the central stalk rotor element with the F(1) delta and epsilon subunits. This Cryptomeria japonica (Japanese cedar) protein is ATP synthase subunit c, chloroplastic.